We begin with the raw amino-acid sequence, 372 residues long: tRNA-specific 2-thiouridylase MnmA (372 aa).

Residues G16–S23 and M42 each bind ATP. The segment at N102–D104 is interaction with target base in tRNA. C107 acts as the Nucleophile in catalysis. The cysteines at positions 107 and 205 are disulfide-linked. G132 is a binding site for ATP. Residues K155–Q157 are interaction with tRNA. Catalysis depends on C205, which acts as the Cysteine persulfide intermediate. The tract at residues R317–Y318 is interaction with tRNA.

This sequence belongs to the MnmA/TRMU family.

The protein localises to the cytoplasm. The catalysed reaction is S-sulfanyl-L-cysteinyl-[protein] + uridine(34) in tRNA + AH2 + ATP = 2-thiouridine(34) in tRNA + L-cysteinyl-[protein] + A + AMP + diphosphate + H(+). Catalyzes the 2-thiolation of uridine at the wobble position (U34) of tRNA, leading to the formation of s(2)U34. The chain is tRNA-specific 2-thiouridylase MnmA from Shewanella putrefaciens (strain CN-32 / ATCC BAA-453).